The following is a 194-amino-acid chain: Holliday junction branch migration complex subunit RuvA (194 aa).

The segment at 1 to 64 (MIGRLRGVLT…DDSAALYGFL (64 aa)) is domain I. A domain II region spans residues 65–140 (SESERRLFRH…RAADFNNGIS (76 aa)). A flexible linker region spans residues 140–144 (STSGK). The tract at residues 145–194 (LNLDTVSEAALALQQLGYKPAEAARMARDAGTESDDVAIVIKKALQTVLR) is domain III.

This sequence belongs to the RuvA family. As to quaternary structure, homotetramer. Forms an RuvA(8)-RuvB(12)-Holliday junction (HJ) complex. HJ DNA is sandwiched between 2 RuvA tetramers; dsDNA enters through RuvA and exits via RuvB. An RuvB hexamer assembles on each DNA strand where it exits the tetramer. Each RuvB hexamer is contacted by two RuvA subunits (via domain III) on 2 adjacent RuvB subunits; this complex drives branch migration. In the full resolvosome a probable DNA-RuvA(4)-RuvB(12)-RuvC(2) complex forms which resolves the HJ.

The protein resides in the cytoplasm. Functionally, the RuvA-RuvB-RuvC complex processes Holliday junction (HJ) DNA during genetic recombination and DNA repair, while the RuvA-RuvB complex plays an important role in the rescue of blocked DNA replication forks via replication fork reversal (RFR). RuvA specifically binds to HJ cruciform DNA, conferring on it an open structure. The RuvB hexamer acts as an ATP-dependent pump, pulling dsDNA into and through the RuvAB complex. HJ branch migration allows RuvC to scan DNA until it finds its consensus sequence, where it cleaves and resolves the cruciform DNA. The polypeptide is Holliday junction branch migration complex subunit RuvA (Xylella fastidiosa (strain M23)).